Reading from the N-terminus, the 309-residue chain is Elongation factor Ts (309 aa).

Residues 82–85 (TDFV) are involved in Mg(2+) ion dislocation from EF-Tu.

This sequence belongs to the EF-Ts family.

It is found in the cytoplasm. Functionally, associates with the EF-Tu.GDP complex and induces the exchange of GDP to GTP. It remains bound to the aminoacyl-tRNA.EF-Tu.GTP complex up to the GTP hydrolysis stage on the ribosome. This Rickettsia africae (strain ESF-5) protein is Elongation factor Ts.